Here is a 314-residue protein sequence, read N- to C-terminus: ATP synthase gamma chain (314 aa).

The protein belongs to the ATPase gamma chain family. In terms of assembly, F-type ATPases have 2 components, CF(1) - the catalytic core - and CF(0) - the membrane proton channel. CF(1) has five subunits: alpha(3), beta(3), gamma(1), delta(1), epsilon(1). CF(0) has three main subunits: a, b and c.

The protein localises to the cellular thylakoid membrane. Its function is as follows. Produces ATP from ADP in the presence of a proton gradient across the membrane. The gamma chain is believed to be important in regulating ATPase activity and the flow of protons through the CF(0) complex. This is ATP synthase gamma chain from Synechocystis sp. (strain ATCC 27184 / PCC 6803 / Kazusa).